The primary structure comprises 302 residues: MSGNKDSDGGWKTFIWNSEKKELLGRTGCSWFKILLFYVIFYGCLAAVFVGTIQALLLTLSNYKPTHQDRVAPPGLSHTPCPEKAEITFNKHELETYMKYTKGMKEFLELYDETAQLDQLKYEDCGENPGGYKNRGDLESDIGVRKACRFKRSWLKDCSGLEDRTFGFKDGKPCVIVKLNRIVNFRPKPPNSNESIPEDAKAKVRPNVIPIYCTNKKEEDAGKLQEVKYFGIGDGFPLQYYPYYGKLLHPQYLQPLVAIQFTNLTMNTELRIECRIYGENIGYSEKDRYQGRFDIKITVNDS.

Residues 1 to 30 (MSGNKDSDGGWKTFIWNSEKKELLGRTGCS) are Cytoplasmic-facing. Residues 31–51 (WFKILLFYVIFYGCLAAVFVG) traverse the membrane as a helical; Signal-anchor for type II membrane protein segment. Topologically, residues 52–302 (TIQALLLTLS…FDIKITVNDS (251 aa)) are extracellular. 2 disulfide bridges follow: Cys125-Cys148 and Cys158-Cys174. N-linked (GlcNAc...) asparagine glycosylation is found at Asn193 and Asn263. A disulfide bridge connects residues Cys213 and Cys274.

Belongs to the X(+)/potassium ATPases subunit beta family. As to quaternary structure, the sodium/potassium-transporting ATPase is composed of a catalytic alpha subunit, an auxiliary non-catalytic beta subunit and an additional regulatory subunit. In terms of processing, glycosylated. In terms of tissue distribution, expressed mainly in epithelial tissues.

It localises to the cell membrane. In terms of biological role, this is the non-catalytic component of the active enzyme, which catalyzes the hydrolysis of ATP coupled with the exchange of Na(+) and K(+) ions across the plasma membrane. The beta subunit regulates, through assembly of alpha/beta heterodimers, the number of sodium pumps transported to the plasma membrane. The polypeptide is Sodium/potassium-transporting ATPase subunit beta-233 (Anguilla anguilla (European freshwater eel)).